The primary structure comprises 304 residues: UDP-N-acetylenolpyruvoylglucosamine reductase (304 aa).

In terms of domain architecture, FAD-binding PCMH-type spans 33–198 (KVGGPVDILL…LEVTFNLEKG (166 aa)). R177 is a catalytic residue. The active-site Proton donor is the S227. Residue E297 is part of the active site.

It belongs to the MurB family. It depends on FAD as a cofactor.

Its subcellular location is the cytoplasm. It catalyses the reaction UDP-N-acetyl-alpha-D-muramate + NADP(+) = UDP-N-acetyl-3-O-(1-carboxyvinyl)-alpha-D-glucosamine + NADPH + H(+). It participates in cell wall biogenesis; peptidoglycan biosynthesis. Its function is as follows. Cell wall formation. The sequence is that of UDP-N-acetylenolpyruvoylglucosamine reductase from Clostridium kluyveri (strain NBRC 12016).